The primary structure comprises 273 residues: Peptidoglycan-N-acetylglucosamine deacetylase BC_1974 (273 aa).

A helical membrane pass occupies residues 10 to 30; it reads IVVVLIAIAAVAIGYYMFQSI. The 187-residue stretch at 69 to 255 folds into the NodB homology domain; that stretch reads KVAYLTFDDG…GLKEKGYEFE (187 aa). Asp-76 functions as the Proton acceptor in the catalytic mechanism. 3 residues coordinate Zn(2+): Asp-77, His-126, and His-130. Catalysis depends on His-230, which acts as the Proton donor.

Belongs to the polysaccharide deacetylase family. Zn(2+) is required as a cofactor. Co(2+) serves as cofactor. The cofactor is Ni(2+).

The protein localises to the cell membrane. It carries out the reaction peptidoglycan-N-acetyl-D-glucosamine + H2O = peptidoglycan-D-glucosamine + acetate.. Its activity is regulated as follows. Inhibited by the hydroxamate N-hydroxy-4-(naphthalene-1-yl)benzamide (NHNB). Its function is as follows. Catalyzes the deacetylation of N-acetylglucosamine (GlcNAc) residues in peptidoglycan. This is Peptidoglycan-N-acetylglucosamine deacetylase BC_1974 from Bacillus cereus (strain ATCC 14579 / DSM 31 / CCUG 7414 / JCM 2152 / NBRC 15305 / NCIMB 9373 / NCTC 2599 / NRRL B-3711).